The primary structure comprises 359 residues: Alkanal monooxygenase alpha chain (359 aa).

The protein belongs to the bacterial luciferase oxidoreductase family. As to quaternary structure, heterodimer of an alpha and a beta chain.

It catalyses the reaction a long-chain fatty aldehyde + FMNH2 + O2 = a long-chain fatty acid + hnu + FMN + H2O + 2 H(+). Its function is as follows. Light-emitting reaction in luminous bacteria. The protein is Alkanal monooxygenase alpha chain (luxA) of Photorhabdus laumondii subsp. laumondii (strain DSM 15139 / CIP 105565 / TT01) (Photorhabdus luminescens subsp. laumondii).